Consider the following 261-residue polypeptide: 1-(5-phosphoribosyl)-5-[(5-phosphoribosylamino)methylideneamino] imidazole-4-carboxamide isomerase (261 aa).

Aspartate 8 serves as the catalytic Proton acceptor. The active-site Proton donor is the aspartate 139.

It belongs to the HisA/HisF family.

It is found in the cytoplasm. The enzyme catalyses 1-(5-phospho-beta-D-ribosyl)-5-[(5-phospho-beta-D-ribosylamino)methylideneamino]imidazole-4-carboxamide = 5-[(5-phospho-1-deoxy-D-ribulos-1-ylimino)methylamino]-1-(5-phospho-beta-D-ribosyl)imidazole-4-carboxamide. Its pathway is amino-acid biosynthesis; L-histidine biosynthesis; L-histidine from 5-phospho-alpha-D-ribose 1-diphosphate: step 4/9. In Janthinobacterium sp. (strain Marseille) (Minibacterium massiliensis), this protein is 1-(5-phosphoribosyl)-5-[(5-phosphoribosylamino)methylideneamino] imidazole-4-carboxamide isomerase.